The primary structure comprises 335 residues: Phosphatidylcholine:ceramide cholinephosphotransferase 2 (335 aa).

5 helical membrane passes run 60 to 80 (LTAFLCLMLSAFLNFFLLTVI), 104 to 124 (WSVGDVLSTVSSVVAFTIIFL), 136 to 156 (FLLGAIMYGLRAVILGVTFLP), 200 to 220 (ILCGDLMFSGHTVVLTIMYFV), and 229 to 249 (LVILRYIAAPITFLGIAALVV). Residue H210 is part of the active site. Residues H253 and D257 contribute to the active site. Residues 258–278 (VLIAYWLTSHVFWSYHQIFEM) form a helical membrane-spanning segment. Residues 279–335 (RKDDRPQAPLSRLWWFWLCYWFESDVADGKLVNKWNWPLEGPQRMHTIMNRINYKLQ) are Cytoplasmic-facing.

The protein belongs to the sphingomyelin synthase family.

It is found in the membrane. The catalysed reaction is an N-acylsphing-4-enine + a 1,2-diacyl-sn-glycero-3-phosphocholine = a sphingomyelin + a 1,2-diacyl-sn-glycerol. The enzyme catalyses an N-acyl-15-methylhexadecasphing-4-enine + a 1,2-diacyl-sn-glycero-3-phosphocholine = an N-acyl-15-methylhexadecasphing-4-enine-1-phosphocholine + a 1,2-diacyl-sn-glycerol. It functions in the pathway lipid metabolism; sphingolipid metabolism. Sphingomyelin synthases (SM synthase or SMS) synthesize the sphingolipid sphingomyelin (SM) through transfer of the phosphatidyl head group of 1,2-diacyl-sn-glycero-3-phosphocholine (phosphatidylcholine, PC) on to the primary hydroxyl of ceramide (N-acylsphingoid base), yielding 1,2-diacyl-sn-glycerol (diacylglycerol, DAG) as a side product. Functions as a bidirectional lipid cholinephosphotransferases capable of converting PC and ceramide to SM and DAG and vice versa depending on the respective levels of ceramide and DAG as phosphocholine acceptors, respectively. The sequence is that of Phosphatidylcholine:ceramide cholinephosphotransferase 2 (sms-2) from Caenorhabditis elegans.